The sequence spans 473 residues: Photosystem II CP43 reaction center protein (473 aa).

Positions 1–14 (MKILYSPRRFYPVE) are excised as a propeptide. At threonine 15 the chain carries N-acetylthreonine. Phosphothreonine is present on threonine 15. 5 helical membrane passes run 69-93 (LFEV…PHLA), 134-155 (LIGP…KDKN), 178-200 (KALY…REIT), 255-275 (KPFA…LSYS), and 291-312 (WFNN…ASQA). Glutamate 367 is a [CaMn4O5] cluster binding site. Residues 447-471 (RARAAAAGFEKGIDRDTEPVLSMTP) form a helical membrane-spanning segment.

Belongs to the PsbB/PsbC family. PsbC subfamily. As to quaternary structure, PSII is composed of 1 copy each of membrane proteins PsbA, PsbB, PsbC, PsbD, PsbE, PsbF, PsbH, PsbI, PsbJ, PsbK, PsbL, PsbM, PsbT, PsbX, PsbY, PsbZ, Psb30/Ycf12, at least 3 peripheral proteins of the oxygen-evolving complex and a large number of cofactors. It forms dimeric complexes. Requires Binds multiple chlorophylls and provides some of the ligands for the Ca-4Mn-5O cluster of the oxygen-evolving complex. It may also provide a ligand for a Cl- that is required for oxygen evolution. PSII binds additional chlorophylls, carotenoids and specific lipids. as cofactor.

The protein resides in the plastid. Its subcellular location is the chloroplast thylakoid membrane. In terms of biological role, one of the components of the core complex of photosystem II (PSII). It binds chlorophyll and helps catalyze the primary light-induced photochemical processes of PSII. PSII is a light-driven water:plastoquinone oxidoreductase, using light energy to abstract electrons from H(2)O, generating O(2) and a proton gradient subsequently used for ATP formation. The chain is Photosystem II CP43 reaction center protein from Adiantum capillus-veneris (Maidenhair fern).